The sequence spans 517 residues: Carotenoid phi-ring synthase (517 aa).

A disordered region spans residues 1-24; sequence MFARDSGRGHRHGRDRQAAVVPAP. FAD contacts are provided by residues Ala45, 64–65, Arg72, Tyr99, Asp461, and Met472; that span reads ER.

This sequence belongs to the carotenoid/retinoid oxidoreductase family. It depends on FAD as a cofactor.

The catalysed reaction is a carotenoid beta-end derivative + 2 A = a carotenoid phi-end derivative + 2 AH2. The protein operates within carotenoid biosynthesis. In terms of biological role, involved in the biosynthesis of isorenieratene, a carotenoid with aromatic end groups. Catalyzes the introduction of two additional double bonds into each ionone ring of beta-carotene to produce isorenieratene. The reaction includes an intramolecular methyl transfer from position C1 to position C2 of the ring. This is Carotenoid phi-ring synthase from Streptomyces griseus.